A 61-amino-acid polypeptide reads, in one-letter code: Sodium/potassium-transporting ATPase subunit gamma (61 aa).

A helical transmembrane segment spans residues 24–44 (KGGLIFAAIAFVVGMLIIFSG).

The protein belongs to the FXYD family. In terms of assembly, regulatory subunit of the sodium/potassium-transporting ATPase which is composed of a catalytic alpha subunit, an auxiliary non-catalytic beta subunit and an additional regulatory subunit.

The protein resides in the membrane. Functionally, may be involved in forming the receptor site for cardiac glycoside binding or may modulate the transport function of the sodium ATPase. The polypeptide is Sodium/potassium-transporting ATPase subunit gamma (fxyd2) (Xenopus laevis (African clawed frog)).